The following is a 353-amino-acid chain: Probable peptidoglycan glycosyltransferase FtsW (353 aa).

8 consecutive transmembrane segments (helical) span residues 26–46 (IFYFFLIFLLSFILLRIPMSF), 53–73 (LILIISIFLLTIVLLIGKSVH), 115–135 (FWGFLKPITIIIIQSVLLLAE), 137–157 (DLGTVIVLFLTTLSVLFLSGV), 162–182 (FFIIIFFVTLIITALVLFEPY), 242–262 (IIGEELGYIGCFLILLMIFFI), 288–308 (IGLWFSFQTLINIGAVTGILP), and 314–334 (LPLISYGGSSLIVNLMAICIL).

Belongs to the SEDS family. FtsW subfamily.

It localises to the cell inner membrane. The catalysed reaction is [GlcNAc-(1-&gt;4)-Mur2Ac(oyl-L-Ala-gamma-D-Glu-L-Lys-D-Ala-D-Ala)](n)-di-trans,octa-cis-undecaprenyl diphosphate + beta-D-GlcNAc-(1-&gt;4)-Mur2Ac(oyl-L-Ala-gamma-D-Glu-L-Lys-D-Ala-D-Ala)-di-trans,octa-cis-undecaprenyl diphosphate = [GlcNAc-(1-&gt;4)-Mur2Ac(oyl-L-Ala-gamma-D-Glu-L-Lys-D-Ala-D-Ala)](n+1)-di-trans,octa-cis-undecaprenyl diphosphate + di-trans,octa-cis-undecaprenyl diphosphate + H(+). It functions in the pathway cell wall biogenesis; peptidoglycan biosynthesis. Peptidoglycan polymerase that is essential for cell division. The polypeptide is Probable peptidoglycan glycosyltransferase FtsW (Buchnera aphidicola subsp. Schizaphis graminum (strain Sg)).